We begin with the raw amino-acid sequence, 693 residues long: Polyribonucleotide nucleotidyltransferase (693 aa).

Residues Asp-489 and Asp-495 each contribute to the Mg(2+) site. Residues 556–615 enclose the KH domain; sequence PQIHVMNINPAKIKDVVGRGGATVKGIVEKTGAQIDTSDSGEVKVFAKDKKSMDMAVAMI. An S1 motif domain is found at 625-693; sequence GQVYKGKIVK…GRVKLSLVAR (69 aa).

It belongs to the polyribonucleotide nucleotidyltransferase family. In terms of assembly, component of the RNA degradosome, which is a multiprotein complex involved in RNA processing and mRNA degradation. Mg(2+) is required as a cofactor.

It is found in the cytoplasm. The catalysed reaction is RNA(n+1) + phosphate = RNA(n) + a ribonucleoside 5'-diphosphate. Functionally, involved in mRNA degradation. Catalyzes the phosphorolysis of single-stranded polyribonucleotides processively in the 3'- to 5'-direction. The protein is Polyribonucleotide nucleotidyltransferase of Francisella tularensis subsp. novicida (strain U112).